A 760-amino-acid polypeptide reads, in one-letter code: Semaphorin-4A (760 aa).

The first 32 residues, 1–32, serve as a signal peptide directing secretion; that stretch reads MALPSLGQDSWSLLRVFFFQLFLLPSLPPASG. The Extracellular portion of the chain corresponds to 33 to 682; it reads TGGQGPMPRV…MAAQRSYWPH (650 aa). Positions 36–494 constitute a Sema domain; that stretch reads QGPMPRVKYH…FSGGIWRVPR (459 aa). A disulfide bond links C113 and C124. N-linked (GlcNAc...) asparagine glycans are attached at residues N120 and N135. 3 cysteine pairs are disulfide-bonded: C142–C151, C269–C379, and C293–C339. N-linked (GlcNAc...) asparagine glycosylation occurs at N496. Residues 496 to 547 form the PSI domain; it reads NCSVYESCVDCVLARDPHCAWDPESRLCSLLSGSTKPWKQDMERGNPEWVCT. 3 cysteine pairs are disulfide-bonded: C497–C514, C506–C523, and C579–C623. The region spanning 572–630 is the Ig-like C2-type domain; sequence NSILELPCPHLSALASYHWSHGRAKISEASATVYNGSLLLLPQDGVGGLYQCVATENGY. Residue N606 is glycosylated (N-linked (GlcNAc...) asparagine). Residues 683–703 form a helical membrane-spanning segment; it reads FLIVTVLLAIVLLGVLTLLLA. Topologically, residues 704 to 760 are cytoplasmic; sequence SPLGALRARGKVQGCGMLPPREKAPLSRDQHLQPSKDHRTSASDVDADNNHLGAEVA. The segment at 720-760 is disordered; sequence MLPPREKAPLSRDQHLQPSKDHRTSASDVDADNNHLGAEVA. Residues 723–744 show a composition bias toward basic and acidic residues; sequence PREKAPLSRDQHLQPSKDHRTS.

Belongs to the semaphorin family. As to quaternary structure, interacts with PLXNB1, PLXNB2 and PLXNB3. Interacts with PLXND1. Interacts with TIMD2. Expressed in neurons and glia in the developing hippocampus.

The protein localises to the cell membrane. Its function is as follows. Cell surface receptor for PLXNB1, PLXNB2, PLXNB3 and PLXND1 that plays an important role in cell-cell signaling. Regulates glutamatergic and GABAergic synapse development. Promotes the development of inhibitory synapses in a PLXNB1-dependent manner and promotes the development of excitatory synapses in a PLXNB2-dependent manner. Plays a role in priming antigen-specific T-cells, promotes differentiation of Th1 T-helper cells, and thereby contributes to adaptive immunity. Promotes phosphorylation of TIMD2. Inhibits angiogenesis. Promotes axon growth cone collapse. Inhibits axonal extension by providing local signals to specify territories inaccessible for growing axons. This Mus musculus (Mouse) protein is Semaphorin-4A (Sema4a).